The chain runs to 141 residues: Hemoglobin subunit alpha-2 (141 aa).

One can recognise a Globin domain in the interval 1–141 (VLTDAERKEV…VATVLTSKYR (141 aa)). Residue H58 participates in O2 binding. H87 contributes to the heme b binding site.

Belongs to the globin family. As to quaternary structure, heterotetramer of two alpha chains and two beta chains. As to expression, red blood cells.

In terms of biological role, involved in oxygen transport from the lung to the various peripheral tissues. This Tachyglossus aculeatus aculeatus (Southeast Australian short-beaked echidna) protein is Hemoglobin subunit alpha-2.